Reading from the N-terminus, the 431-residue chain is Probable sodium/metabolite cotransporter BASS3, chloroplastic (431 aa).

A chloroplast-targeting transit peptide spans methionine 1 to valine 70. The next 9 membrane-spanning stretches (helical) occupy residues phenylalanine 110–proline 130, leucine 145–phenylalanine 165, valine 169–valine 189, threonine 198–alanine 218, isoleucine 238–valine 258, valine 261–leucine 281, valine 288–isoleucine 308, leucine 325–phenylalanine 345, and valine 387–tryptophan 407.

Belongs to the bile acid:sodium symporter (BASS) (TC 2.A.28) family.

It localises to the membrane. The protein localises to the plastid. The protein resides in the chloroplast envelope. May function as sodium-coupled metabolite transporter across the chloroplast envelope. The sequence is that of Probable sodium/metabolite cotransporter BASS3, chloroplastic (BASS3) from Arabidopsis thaliana (Mouse-ear cress).